Consider the following 763-residue polypeptide: Ethylene receptor 2 (763 aa).

A run of 3 helical transmembrane segments spans residues 58 to 78 (FLIA…ATCS), 86 to 106 (IVLQ…ITMF), and 115 to 135 (VVLA…ATAI). The Cu cation site is built by cysteine 97 and histidine 101. The GAF domain maps to 190–339 (DRHTILYTTM…VVADQVAVAL (150 aa)). A Histidine kinase domain is found at 382 to 615 (AMYDGMRRPM…TIMLALQFQL (234 aa)). One can recognise a Response regulatory domain in the interval 641 to 760 (QVILVDSDDT…ALGDELYRVL (120 aa)). Position 692 is a 4-aspartylphosphate (aspartate 692).

It belongs to the ethylene receptor family. It depends on Cu cation as a cofactor. Expressed in anthers and hulls.

It localises to the endoplasmic reticulum membrane. It carries out the reaction ATP + protein L-histidine = ADP + protein N-phospho-L-histidine.. Ethylene receptor related to bacterial two-component regulators. Acts as a negative regulator of ethylene signaling. May delay the transition from the vegetative stage to the floral stage by up-regulating GI (GIGANTEA) and RCN1 and cause starch accumulation in stems by down-regulating the alpha-amylase AMY3D. The protein is Ethylene receptor 2 of Oryza sativa subsp. indica (Rice).